The chain runs to 247 residues: 3-deoxy-manno-octulosonate cytidylyltransferase (247 aa).

This sequence belongs to the KdsB family.

Its subcellular location is the cytoplasm. It catalyses the reaction 3-deoxy-alpha-D-manno-oct-2-ulosonate + CTP = CMP-3-deoxy-beta-D-manno-octulosonate + diphosphate. It participates in nucleotide-sugar biosynthesis; CMP-3-deoxy-D-manno-octulosonate biosynthesis; CMP-3-deoxy-D-manno-octulosonate from 3-deoxy-D-manno-octulosonate and CTP: step 1/1. It functions in the pathway bacterial outer membrane biogenesis; lipopolysaccharide biosynthesis. Its function is as follows. Activates KDO (a required 8-carbon sugar) for incorporation into bacterial lipopolysaccharide in Gram-negative bacteria. This Methylorubrum extorquens (strain CM4 / NCIMB 13688) (Methylobacterium extorquens) protein is 3-deoxy-manno-octulosonate cytidylyltransferase.